Here is a 107-residue protein sequence, read N- to C-terminus: UPF0145 protein YbjQ (107 aa).

This sequence belongs to the UPF0145 family.

In Escherichia coli (strain SMS-3-5 / SECEC), this protein is UPF0145 protein YbjQ.